The primary structure comprises 344 residues: MERIVTPAEMFEDGNSELSLRPQKINEYIGQDKVKERLNIFIKAARNRKEALDHVLLYGPPGLGKTTLANIIAKEMTGDLKITSGPAIERAGDLAAILTTLKDYDVLFIDEIHRLNRSVEEILYPAMEDYALDIVIGKGAAAKSIRLDLPKFTLIGATTRIGMLTSPLRDRFGVLCAMEYYDETQLKEIVIRSAAVFGCKITEEGALEIASRSRGTPRIANRLLKRVRDYSEVKSNKVISLKEARDALELLEVDNQGFDKVDNKILEAIIDNFNGGPVGIETLSYFIGEELGTIEDVYEPYLLQKGFIVRTPRGRIASDKAYKHLGRVNNKNNNSNKGQTSFFK.

The interval 1–181 (MERIVTPAEM…FGVLCAMEYY (181 aa)) is large ATPase domain (RuvB-L). ATP is bound by residues leucine 20, arginine 21, glycine 62, lysine 65, threonine 66, threonine 67, 128 to 130 (EDY), arginine 171, tyrosine 181, and arginine 218. Threonine 66 is a binding site for Mg(2+). Residues 182 to 252 (DETQLKEIVI…EARDALELLE (71 aa)) are small ATPAse domain (RuvB-S). The tract at residues 255–344 (NQGFDKVDNK…SNKGQTSFFK (90 aa)) is head domain (RuvB-H). DNA is bound by residues arginine 310 and arginine 315.

Belongs to the RuvB family. Homohexamer. Forms an RuvA(8)-RuvB(12)-Holliday junction (HJ) complex. HJ DNA is sandwiched between 2 RuvA tetramers; dsDNA enters through RuvA and exits via RuvB. An RuvB hexamer assembles on each DNA strand where it exits the tetramer. Each RuvB hexamer is contacted by two RuvA subunits (via domain III) on 2 adjacent RuvB subunits; this complex drives branch migration. In the full resolvosome a probable DNA-RuvA(4)-RuvB(12)-RuvC(2) complex forms which resolves the HJ.

Its subcellular location is the cytoplasm. It catalyses the reaction ATP + H2O = ADP + phosphate + H(+). In terms of biological role, the RuvA-RuvB-RuvC complex processes Holliday junction (HJ) DNA during genetic recombination and DNA repair, while the RuvA-RuvB complex plays an important role in the rescue of blocked DNA replication forks via replication fork reversal (RFR). RuvA specifically binds to HJ cruciform DNA, conferring on it an open structure. The RuvB hexamer acts as an ATP-dependent pump, pulling dsDNA into and through the RuvAB complex. RuvB forms 2 homohexamers on either side of HJ DNA bound by 1 or 2 RuvA tetramers; 4 subunits per hexamer contact DNA at a time. Coordinated motions by a converter formed by DNA-disengaged RuvB subunits stimulates ATP hydrolysis and nucleotide exchange. Immobilization of the converter enables RuvB to convert the ATP-contained energy into a lever motion, pulling 2 nucleotides of DNA out of the RuvA tetramer per ATP hydrolyzed, thus driving DNA branch migration. The RuvB motors rotate together with the DNA substrate, which together with the progressing nucleotide cycle form the mechanistic basis for DNA recombination by continuous HJ branch migration. Branch migration allows RuvC to scan DNA until it finds its consensus sequence, where it cleaves and resolves cruciform DNA. This chain is Holliday junction branch migration complex subunit RuvB, found in Clostridium botulinum (strain Eklund 17B / Type B).